Reading from the N-terminus, the 386-residue chain is Protein phosphatase methylesterase 1 (386 aa).

Residues 1–38 (MSALEKSMHLGRLPSRPPLPGSGGSQSGAKMRMGPGRK) form a disordered region. S15 is modified (phosphoserine). Asymmetric dimethylarginine; alternate is present on R16. The residue at position 16 (R16) is an Omega-N-methylarginine; alternate. Phosphoserine is present on S42. S156 is an active-site residue. A compositionally biased stretch (acidic residues) spans 254-265 (IIEEEEEDEEGS). The segment at 254–280 (IIEEEEEDEEGSESISKRKKEDDMETK) is disordered. Positions 268–280 (ISKRKKEDDMETK) are enriched in basic and acidic residues. H349 is an active-site residue.

This sequence belongs to the AB hydrolase superfamily. In terms of assembly, binds PPP2CA and PPP2CB. Phosphorylated by SIK1 following increases in intracellular sodium, leading to dissociation from the protein phosphatase 2A (PP2A) complex and subsequent dephosphorylation of sodium/potassium-transporting ATPase ATP1A1.

It carries out the reaction [phosphatase 2A protein]-C-terminal L-leucine methyl ester + H2O = [phosphatase 2A protein]-C-terminal L-leucine + methanol + H(+). Demethylates proteins that have been reversibly carboxymethylated. Demethylates PPP2CB (in vitro) and PPP2CA. Binding to PPP2CA displaces the manganese ion and inactivates the enzyme. In Pongo abelii (Sumatran orangutan), this protein is Protein phosphatase methylesterase 1 (PPME1).